The chain runs to 283 residues: Urease accessory protein UreD (283 aa).

The protein belongs to the UreD family. UreD, UreF and UreG form a complex that acts as a GTP-hydrolysis-dependent molecular chaperone, activating the urease apoprotein by helping to assemble the nickel containing metallocenter of UreC. The UreE protein probably delivers the nickel.

The protein localises to the cytoplasm. Functionally, required for maturation of urease via the functional incorporation of the urease nickel metallocenter. The polypeptide is Urease accessory protein UreD (Acaryochloris marina (strain MBIC 11017)).